The chain runs to 791 residues: Disintegrin and metalloproteinase domain-containing protein 1a (791 aa).

Residues 1–65 (MSVAAAGRGF…LLIFLPSTFC (65 aa)) form the signal peptide. Residue Asn-72 is glycosylated (N-linked (GlcNAc...) asparagine). Residues 201-220 (CSVTPKDSPGDTSHPPRSRK) form a disordered region. The Peptidase M12B domain maps to 235-429 (KYVEMFVVVN…HRGACLLDEP (195 aa)). The N-linked (GlcNAc...) asparagine glycan is linked to Asn-256. Disulfide bonds link Cys-345/Cys-424, Cys-385/Cys-408, and Cys-387/Cys-393. Position 370 (His-370) interacts with Zn(2+). Residue Glu-371 is part of the active site. Zn(2+) contacts are provided by His-374 and His-380. 2 N-linked (GlcNAc...) asparagine glycosylation sites follow: Asn-407 and Asn-484. Residues 438–522 (AANCGNGVVE…ECPANSYMQD (85 aa)) form the Disintegrin domain. A disulfide bridge connects residues Cys-494 and Cys-514. N-linked (GlcNAc...) asparagine glycosylation occurs at Asn-630. An EGF-like domain is found at 663 to 697 (LQYNCEPQEMCHGNGVCNNFKHCHCDAGFAPPDCS). Cystine bridges form between Cys-667/Cys-679, Cys-673/Cys-685, and Cys-687/Cys-696. A helical transmembrane segment spans residues 741–761 (VMVLVVPIFLVVLLCCLMLIA). Residues 762–791 (YLWSEVQEVVSPPSSSESSSSSSWSDSDSQ) are Cytoplasmic-facing. The tract at residues 772-791 (SPPSSSESSSSSSWSDSDSQ) is disordered.

In terms of assembly, heterodimer with ADAM2/fertilin subunit beta. Testis.

The protein localises to the membrane. May be involved in sperm-egg fusion. The protein is Disintegrin and metalloproteinase domain-containing protein 1a (Adam1a) of Mus musculus (Mouse).